We begin with the raw amino-acid sequence, 356 residues long: Cytochrome c oxidase subunit 2 (356 aa).

The signal sequence occupies residues 1-23; it reads MNKGLCNWRLFSLFGMMALLLAG. The tract at residues 24-259 is cytochrome c oxidase subunit II; that stretch reads CGKPFLSTLQ…QNAKKPVVTD (236 aa). 2 helical membrane-spanning segments follow: residues 45-65 and 93-113; these read LMLL…IIFV and IIWT…TVLT. Residues histidine 178, cysteine 219, cysteine 223, and histidine 227 each contribute to the Cu cation site. In terms of domain architecture, Cytochrome c spans 260-356; that stretch reads PVAKEGEAIF…TKYLMSLKVE (97 aa). Positions 273, 276, 277, and 331 each coordinate heme c.

Belongs to the cytochrome c oxidase subunit 2 family. It depends on Cu cation as a cofactor. The cofactor is heme c.

Its subcellular location is the cell membrane. The enzyme catalyses 4 Fe(II)-[cytochrome c] + O2 + 8 H(+)(in) = 4 Fe(III)-[cytochrome c] + 2 H2O + 4 H(+)(out). Its function is as follows. Subunits I and II form the functional core of the enzyme complex. Electrons originating in cytochrome c are transferred via heme a and Cu(A) to the binuclear center formed by heme a3 and Cu(B). This is Cytochrome c oxidase subunit 2 (ctaC) from Bacillus sp. (strain PS3).